A 226-amino-acid polypeptide reads, in one-letter code: E3 ubiquitin-protein ligase RNF186 (226 aa).

Residues 39–85 (CLVCREPYSGVRPPKLLGCQHAFCAVCLKLLLCVQDDAWSIPCPLCR) form an RING-type zinc finger. The segment at 121–143 (GLANPATLTAGQPREAGEEEQDA) is disordered. The next 2 membrane-spanning stretches (helical) occupy residues 157–177 (HLLLLVLLIILILPFIYPGVI) and 179–199 (WVLSFLETLALLLALLFCSHP).

In terms of assembly, interacts with BNIP1. Polyubiquitinated. 'Lys-29' autoubiquitination leads to proteasomal degradation.

It localises to the endoplasmic reticulum membrane. The catalysed reaction is S-ubiquitinyl-[E2 ubiquitin-conjugating enzyme]-L-cysteine + [acceptor protein]-L-lysine = [E2 ubiquitin-conjugating enzyme]-L-cysteine + N(6)-ubiquitinyl-[acceptor protein]-L-lysine.. It participates in protein modification; protein ubiquitination. Its function is as follows. E3 ubiquitin protein ligase that is part of an apoptotic signaling pathway activated by endoplasmic reticulum stress. Stimulates the expression of proteins specific of the unfolded protein response (UPR), ubiquitinates BNIP1 and regulates its localization to the mitochondrion and induces calcium release from the endoplasmic reticulum that ultimately leads to cell apoptosis. Plays a role in the maintenance of intestinal homeostasis and clearance of enteric pathogens. Upon NOD2 stimulation, ubiquitinates the ER stress sensor activating transcription factor 6/ATF6 and promotes the unfolded protein response UPR. Participates in basal level of autophagy maintenance by regulating the ubiquitination of EPHB2. Upon stimulation by ligand EFNB1, ubiquitinates EPHB2 and further recruits MAP1LC3B for autophagy induction. Controls nutrient sensing by ubiquitinating Sestrin-2/SESN2, which is an intracellular sensor of cytosolic leucine and inhibitor of mTORC1 activity. The sequence is that of E3 ubiquitin-protein ligase RNF186 from Bos taurus (Bovine).